We begin with the raw amino-acid sequence, 316 residues long: Pantothenate kinase (316 aa).

Residue 95 to 102 (GSVAVGKS) coordinates ATP.

The protein belongs to the prokaryotic pantothenate kinase family.

The protein resides in the cytoplasm. It catalyses the reaction (R)-pantothenate + ATP = (R)-4'-phosphopantothenate + ADP + H(+). It participates in cofactor biosynthesis; coenzyme A biosynthesis; CoA from (R)-pantothenate: step 1/5. The chain is Pantothenate kinase from Erwinia tasmaniensis (strain DSM 17950 / CFBP 7177 / CIP 109463 / NCPPB 4357 / Et1/99).